Consider the following 275-residue polypeptide: Phosphate import ATP-binding protein PstB 1 (275 aa).

The 240-residue stretch at 22–261 folds into the ABC transporter domain; it reads IETRDLSVYY…DRTEKIFNSP (240 aa). An ATP-binding site is contributed by 54–61; sequence GPSGCGKS.

This sequence belongs to the ABC transporter superfamily. Phosphate importer (TC 3.A.1.7) family. In terms of assembly, the complex is composed of two ATP-binding proteins (PstB), two transmembrane proteins (PstC and PstA) and a solute-binding protein (PstS).

The protein resides in the cell inner membrane. The catalysed reaction is phosphate(out) + ATP + H2O = ADP + 2 phosphate(in) + H(+). Its function is as follows. Part of the ABC transporter complex PstSACB involved in phosphate import. Responsible for energy coupling to the transport system. In Synechococcus sp. (strain JA-3-3Ab) (Cyanobacteria bacterium Yellowstone A-Prime), this protein is Phosphate import ATP-binding protein PstB 1.